Here is a 301-residue protein sequence, read N- to C-terminus: Ribosomal RNA small subunit methyltransferase H (301 aa).

S-adenosyl-L-methionine-binding positions include 31 to 33 (GGY), aspartate 49, phenylalanine 76, aspartate 97, and glutamine 104.

It belongs to the methyltransferase superfamily. RsmH family.

The protein resides in the cytoplasm. It catalyses the reaction cytidine(1402) in 16S rRNA + S-adenosyl-L-methionine = N(4)-methylcytidine(1402) in 16S rRNA + S-adenosyl-L-homocysteine + H(+). In terms of biological role, specifically methylates the N4 position of cytidine in position 1402 (C1402) of 16S rRNA. This is Ribosomal RNA small subunit methyltransferase H from Ehrlichia ruminantium (strain Welgevonden).